The following is a 1969-amino-acid chain: Cytadherence high molecular weight protein 1 (1969 aa).

An HAT 1 repeat occupies 148–166; the sequence is YYDENEEWVWTGYFDEDNK. Residues 174-244 form a disordered region; it reads KPAEVEALEE…QPESEQEGSG (71 aa). Acidic residues-rich tracts occupy residues 179-207 and 214-242; these read EALEEESEATEEVVEQEPQEEVQAEEVVE and QPEEEVAAEEYAEAAQEEYEEQPESEQEG. 3 HAT repeats span residues 258 to 278, 300 to 331, and 333 to 353; these read YYDENNDWVWTGYFDENNNFV and AQQEQVQEEYEQQPEQEGSGEYWEQFVGVEGY. Positions 294–319 are disordered; sequence QVEEYSAQQEQVQEEYEQQPEQEGSG. The tract at residues 365–393 is disordered; sequence VSEEQYSESVSEEQEPASEEQVAEEPAQV. Residues 374–387 show a composition bias toward acidic residues; the sequence is VSEEQEPASEEQVA. HAT repeat units follow at residues 477-497 and 959-997; these read YYDENNEWVWKGYFNEYGMFI and LTLVEEEPFFNKFIGNEQYGYYNNKNVWIWTGYFDDQNN. Residues 1000–1027 adopt a coiled-coil conformation; that stretch reads SDKDSKTQKVDQLIEEFNKQEAIKKTEE. One copy of the HAT 7 repeat lies at 1029–1067; it reads EAKKASEPFYNKYIGNKQFGYYNDKNVWIWNGYFDENDQ. Coiled coils occupy residues 1082–1190, 1547–1621, and 1758–1790; these read IEDE…FDNF, SVNQ…LALT, and NRGDYKFVQEQIQELRAEHANKTRAISFYNKKV.

It localises to the cell projection. The protein localises to the attachment organelle membrane. In terms of biological role, component of the cytoskeleton-like structure which stabilizes the shape of the wall-less Mycoplasma. This cytoskeleton-like network of accessory proteins containing HMW proteins 1 to 5 allows the proper anchoring of cytadhesin proteins in the mycoplasmal membrane at the attachment organelle. The protein is Cytadherence high molecular weight protein 1 (hlp1) of Mycoplasmoides gallisepticum (strain R(low / passage 15 / clone 2)) (Mycoplasma gallisepticum).